Consider the following 243-residue polypeptide: Small ribosomal subunit protein uS3 (243 aa).

Residues 39 to 107 (IRAYLIKELK…ETHLNIVEVR (69 aa)) enclose the KH type-2 domain. The interval 214 to 243 (ASERRGLEGDAQGPASRERGDRPDRRRENA) is disordered. Residues 229–243 (SRERGDRPDRRRENA) show a composition bias toward basic and acidic residues.

Belongs to the universal ribosomal protein uS3 family. In terms of assembly, part of the 30S ribosomal subunit. Forms a tight complex with proteins S10 and S14.

Functionally, binds the lower part of the 30S subunit head. Binds mRNA in the 70S ribosome, positioning it for translation. This Agrobacterium fabrum (strain C58 / ATCC 33970) (Agrobacterium tumefaciens (strain C58)) protein is Small ribosomal subunit protein uS3.